Here is a 280-residue protein sequence, read N- to C-terminus: Urease accessory protein UreD 1 (280 aa).

This sequence belongs to the UreD family. UreD, UreF and UreG form a complex that acts as a GTP-hydrolysis-dependent molecular chaperone, activating the urease apoprotein by helping to assemble the nickel containing metallocenter of UreC. The UreE protein probably delivers the nickel.

The protein resides in the cytoplasm. Required for maturation of urease via the functional incorporation of the urease nickel metallocenter. In Brucella abortus biovar 1 (strain 9-941), this protein is Urease accessory protein UreD 1.